Consider the following 644-residue polypeptide: Sodium/hydrogen exchanger 9 (644 aa).

Over 1–20 the chain is Lumenal; sequence MAGQLRFTSGKDEDHFQHQG. The chain crosses the membrane as a helical span at residues 21-41; sequence AVELLAFNFLLILTILTIWLF. Residues 42-45 are Cytoplasmic-facing; that stretch reads KNHR. The chain crosses the membrane as a helical span at residues 46 to 66; the sequence is FRFLHETGGAMVYGLIMGLIL. Residues 67–126 are Lumenal-facing; sequence RYATAPTDIDSGTVYNCGNLFFSPSTLLVNITDQVYEYKYQREINQHNISPHQGNAILEK. A helical membrane pass occupies residues 127–147; the sequence is MTFDPEIFFNVLLPPIIFHAG. Residues 148–164 lie on the Cytoplasmic side of the membrane; it reads YSLKKRHFFQNLGSILT. A helical transmembrane segment spans residues 165 to 185; it reads YAFLGTAISCVVIGLIMYGFV. Residues 186 to 203 are Lumenal-facing; that stretch reads KAMVHAGQLKSGDFHFTD. A helical membrane pass occupies residues 204 to 224; sequence CLFFGSLMSATDPVTVLAIFH. Residues 225-235 lie on the Cytoplasmic side of the membrane; sequence ELHVDPDLYTL. The helical transmembrane segment at 236–256 threads the bilayer; the sequence is LFGESVLNDAVAIVLTYSISI. Over 257 to 277 the chain is Lumenal; sequence YSPKENPNAFDTAAFFQSVGN. Residues 278-298 traverse the membrane as a helical segment; the sequence is FLGIFAGSFAMGSAYAVVTAL. Residues 299–309 lie on the Cytoplasmic side of the membrane; it reads LTKFTKLREFP. A helical transmembrane segment spans residues 310 to 327; sequence MLETGLFFLLSWSAFLSA. Over 328–333 the chain is Lumenal; that stretch reads EAAGLT. A helical membrane pass occupies residues 334 to 350; sequence GIVAVLFCGVTQAHYTY. Over 351–364 the chain is Cytoplasmic; sequence NNLSSDSKLRTKQL. Residues 365-385 form a helical membrane-spanning segment; sequence FEFMNFLAENVIFCYMGLALF. A topological domain (lumenal) is located at residue T386. A helical membrane pass occupies residues 387 to 407; sequence FQNHIFNALFILGAFLAIFVA. The Cytoplasmic segment spans residues 408-429; that stretch reads RACNIYPLSFLLNLGRKQKIPW. The chain crosses the membrane as a helical span at residues 430 to 450; sequence NFQHMMMFSGLRGAIAFALAI. At 451–465 the chain is on the lumenal side; the sequence is RNTESQPKQMMFTTT. A helical membrane pass occupies residues 466 to 486; the sequence is LLLVFFTVWVFGGGTTPMLTW. At 487–644 the chain is on the cytoplasmic side; it reads LQIRVGVDLD…EQTRGQPQMD (158 aa). The interval 590–644 is disordered; it reads YQEQSPSPSSPTTKLALDQKSSGQTPGKENIYEGDLGLGGYDLKLEQTRGQPQMD.

The protein belongs to the monovalent cation:proton antiporter 1 (CPA1) transporter (TC 2.A.36) family. Homodimer; phosphatidylinositol-4,5-bisphosphate (PIP2) and phosphatidylinositol 3,4,5-trisphosphate (PIP3) could be involved in the dimer stabilization. Interacts (via the C-terminus) with RACK1. Interacts with CHP1. Expressed in the brain. Highly expressed in immune cells, specifically macrophages.

It is found in the late endosome membrane. Its subcellular location is the cell membrane. The protein localises to the early endosome membrane. It localises to the recycling endosome membrane. The protein resides in the cytoplasmic vesicle. It is found in the phagosome membrane. It catalyses the reaction Na(+)(in) + H(+)(out) = Na(+)(out) + H(+)(in). It carries out the reaction K(+)(in) + H(+)(out) = K(+)(out) + H(+)(in). Its function is as follows. Endosomal Na(+), K(+)/H(+) antiporter. Mediates the electroneutral exchange of endosomal luminal H(+) for a cytosolic Na(+) or K(+). By facilitating proton efflux, SLC9A9 counteracts the acidity generated by vacuolar (V)-ATPase, thereby limiting luminal acidification. Regulates organellar pH and consequently, endosome maturation and endocytic trafficking of plasma membrane receptors and neurotransporters. Promotes the recycling of transferrin receptors back to the cell surface to facilitate additional iron uptake in the brain. Regulates synaptic transmission by regulating the luminal pH of axonal endosomes. Regulates phagosome lumenal pH, thus affecting phagosome maturation, and consequently, microbicidal activity in macrophages. Can also be active at the cell surface of specialized cells, e.g., in the inner ear hair bundles uses the high K(+) of the endolymph to regulate intracelular pH. This is Sodium/hydrogen exchanger 9 (Slc9a9) from Mus musculus (Mouse).